Here is a 161-residue protein sequence, read N- to C-terminus: 2-C-methyl-D-erythritol 2,4-cyclodiphosphate synthase (161 aa).

The a divalent metal cation site is built by aspartate 11 and histidine 13. 4-CDP-2-C-methyl-D-erythritol 2-phosphate is bound by residues aspartate 11–histidine 13 and histidine 37–serine 38. Histidine 45 serves as a coordination point for a divalent metal cation. Residues aspartate 59–glycine 61 and threonine 135–glutamate 138 contribute to the 4-CDP-2-C-methyl-D-erythritol 2-phosphate site.

Belongs to the IspF family. As to quaternary structure, homotrimer. A divalent metal cation is required as a cofactor.

It catalyses the reaction 4-CDP-2-C-methyl-D-erythritol 2-phosphate = 2-C-methyl-D-erythritol 2,4-cyclic diphosphate + CMP. Its pathway is isoprenoid biosynthesis; isopentenyl diphosphate biosynthesis via DXP pathway; isopentenyl diphosphate from 1-deoxy-D-xylulose 5-phosphate: step 4/6. Functionally, involved in the biosynthesis of isopentenyl diphosphate (IPP) and dimethylallyl diphosphate (DMAPP), two major building blocks of isoprenoid compounds. Catalyzes the conversion of 4-diphosphocytidyl-2-C-methyl-D-erythritol 2-phosphate (CDP-ME2P) to 2-C-methyl-D-erythritol 2,4-cyclodiphosphate (ME-CPP) with a corresponding release of cytidine 5-monophosphate (CMP). The polypeptide is 2-C-methyl-D-erythritol 2,4-cyclodiphosphate synthase (Acaryochloris marina (strain MBIC 11017)).